The following is a 139-amino-acid chain: Transcription antitermination protein NusB (139 aa).

Belongs to the NusB family.

Involved in transcription antitermination. Required for transcription of ribosomal RNA (rRNA) genes. Binds specifically to the boxA antiterminator sequence of the ribosomal RNA (rrn) operons. The protein is Transcription antitermination protein NusB of Limosilactobacillus fermentum (strain NBRC 3956 / LMG 18251) (Lactobacillus fermentum).